We begin with the raw amino-acid sequence, 227 residues long: Large ribosomal subunit protein uL3 (227 aa).

Gln-151 is modified (N5-methylglutamine).

The protein belongs to the universal ribosomal protein uL3 family. As to quaternary structure, part of the 50S ribosomal subunit. Forms a cluster with proteins L14 and L19. Methylated by PrmB.

In terms of biological role, one of the primary rRNA binding proteins, it binds directly near the 3'-end of the 23S rRNA, where it nucleates assembly of the 50S subunit. The sequence is that of Large ribosomal subunit protein uL3 from Gluconobacter oxydans (strain 621H) (Gluconobacter suboxydans).